The chain runs to 570 residues: GDP-Man:Man(3)GlcNAc(2)-PP-Dol alpha-1,2-mannosyltransferase (570 aa).

Topologically, residues 1–7 (MKLADFV) are lumenal. The helical transmembrane segment at 8-70 (TYVFGSLLAG…DFGWKNSSVR (63 aa)) threads the bilayer. The Cytoplasmic segment spans residues 71 to 200 (RAFILASERP…RLVESKSWPK (130 aa)). The helical intramembrane region spans 201 to 221 (FTLLGQAYGSIILSIEALTTL). Over 222 to 446 (APDYWIDTMG…FGINAMWNEH (225 aa)) the chain is Cytoplasmic. An intramembrane region (helical) is located at residues 447 to 467 (FGIAVVEYMASGLIPLCHASA). At 468–570 (GPLYDIVVPW…LNLTHNRMFS (103 aa)) the chain is on the cytoplasmic side.

Belongs to the glycosyltransferase group 1 family.

The protein resides in the endoplasmic reticulum membrane. The enzyme catalyses an alpha-D-Man-(1-&gt;3)-[alpha-D-Man-(1-&gt;6)]-beta-D-Man-(1-&gt;4)-beta-D-GlcNAc-(1-&gt;4)-alpha-D-GlcNAc-diphospho-di-trans,poly-cis-dolichol + 2 GDP-alpha-D-mannose = an alpha-D-Man-(1-&gt;2)-alpha-D-Man-(1-&gt;2)-alpha-D-Man-(1-&gt;3)-[alpha-D-Man-(1-&gt;6)]-beta-D-Man-(1-&gt;4)-beta-D-GlcNAc-(1-&gt;4)-alpha-D-GlcNAc-diphospho-di-trans,poly-cis-dolichol + 2 GDP + 2 H(+). Its pathway is protein modification; protein glycosylation. GDP-Man:Man(3)GlcNAc(2)-PP-Dol alpha-1,2-mannosyltransferase that operates in the biosynthetic pathway of dolichol-linked oligosaccharides, the glycan precursors employed in protein asparagine (N)-glycosylation. The assembly of dolichol-linked oligosaccharides begins on the cytosolic side of the endoplasmic reticulum membrane and finishes in its lumen. The sequential addition of sugars to dolichol pyrophosphate produces dolichol-linked oligosaccharides containing fourteen sugars, including two GlcNAcs, nine mannoses and three glucoses. Once assembled, the oligosaccharide is transferred from the lipid to nascent proteins by oligosaccharyltransferases. Catalyzes, on the cytoplasmic face of the endoplasmic reticulum, the addition of the fourth and fifth mannose residues to the dolichol-linked oligosaccharide chain, to produce Man(5)GlcNAc(2)-PP-dolichol core oligosaccharide. The polypeptide is GDP-Man:Man(3)GlcNAc(2)-PP-Dol alpha-1,2-mannosyltransferase (ALG11) (Kluyveromyces lactis (strain ATCC 8585 / CBS 2359 / DSM 70799 / NBRC 1267 / NRRL Y-1140 / WM37) (Yeast)).